The primary structure comprises 858 residues: DNA mismatch repair protein MutS (858 aa).

611–618 is a binding site for ATP; it reads GPNMGGKS.

This sequence belongs to the DNA mismatch repair MutS family.

This protein is involved in the repair of mismatches in DNA. It is possible that it carries out the mismatch recognition step. This protein has a weak ATPase activity. This is DNA mismatch repair protein MutS from Actinobacillus succinogenes (strain ATCC 55618 / DSM 22257 / CCUG 43843 / 130Z).